The following is a 413-amino-acid chain: THAP domain-containing protein 5 (413 aa).

The THAP-type zinc finger occupies 1 to 85 (MPRYCAASYC…LKHTAVPTIF (85 aa)). Residues 84-118 (IFSSPDDEEKGSSQNSPQEIRREDQEETTKNVESK) are disordered. Residues 102-118 (EIRREDQEETTKNVESK) are compositionally biased toward basic and acidic residues. The stretch at 375–399 (RLRSLEALIGQLKQENLLSEEKLKI) forms a coiled coil.

Its subcellular location is the nucleus. The chain is THAP domain-containing protein 5 (THAP5) from Gallus gallus (Chicken).